The sequence spans 1156 residues: MDQRLGYKFLVPDPKAGVFYRPLHFQYVSYSNFILHRLHEILTVKRPLLSFKNNTERIMIEISNVKVTPPDYSPIIASIKGKSYDALATFTVNIFKEVMTKEGISITKISSYEGKDSHLIKIPLLIGYGNKNPLDTAKYLVPNVIGGVFINKQSVEKVGINLVEKITTWPKFRVVKPNSFTFSFSSVSPPNVLPTRYRHYKISLDISQLEALNISSTKTFITVNIVLLSQYLSRVSLEFIRRSLSYDMPPEVVYLVNAIIDSAKRITESITDFNIDTYINDLVEAEHIKQKSQLTINEFKYEMLHNFLPHMNYTPDQLKGFYMISLLRKFLYCIYHTSRYPDRDSMVCHRILTYGKYFETLAHDELENYIGNIRNDIMNNHKNRGTYAVNIHVLTTPGLNHAFSSLLSGKFKKSDGSYRTHPHYSWMQNISIPRSVGFYPDQVKISKMFSVRKYHPSQYLYFCSSDVPERGPQVGLVSQLSVLSSITNILTSEYLDLEKKICEYIRSYYKDDISYFETGFPITIENALVASLNPNMICDFVTDFRRRKRMGFFGNLEVGITLVRDHMNEIRINIGAGRLVRPFLVVDNGELMMDVCPELESRLDDMTFSDIQKEFPHVIEMVDIEQFTFSNVCESVQKFRMMSKDERKQYDLCDFPAEFRDGYVASSLVGINHNSGPRAILGCAQAKQAISCLSSDIRNKIDNGIHLMYPERPIVISKALETSKIAANCFGQHVTIALMSYKGINQEDGIIIKKQFIQRGGLDIVTAKKHQVEIPLENFNNKERDRSNAYSKLESNGLVRLNAFLESGDAIARNISSRTLEDDFARDNQISFDVSEKYTDMYKSRVERVQVELTDKVKVRVLTMKERRPILGDKFTTRTSQKGTVAYIADETELPYDENGITPDVIINSTSIFSRKTISMLIEVILTAAYSAKPYNNKGENRPVCFPSSNETSIDTYMQFAKQCYEHSNPKLSDEELSDKIFCEKILYDPETDKPYASKVFFGPIYYLRLRHLTQDKATVRCRGKKTKLIRQANEGRKRGGGIKFGEMERDCLIAHGAANTITEVLKDSEEDYQDVYVCENCGDIAAQIKGINTCLRCSKLNLSPLLTKIDTTHVSKVFLTQMNARGVKVKLDFERRPPSFYKPLDKVDLKPSFLV.

It belongs to the RNA polymerase beta chain family. In terms of assembly, the DNA-dependent RNA polymerase used for intermediate and late genes expression consists of eight subunits 147 kDa, 133 kDa, 35 kDa, 30 kDa, 22 kDa, 19 kDa, 18 kDa and 7 kDa totalling more than 500 kDa in mass. The same holoenzyme, with the addition of the transcription-specificity factor RAP94, is used for early gene expression.

It is found in the virion. The catalysed reaction is RNA(n) + a ribonucleoside 5'-triphosphate = RNA(n+1) + diphosphate. Part of the DNA-dependent RNA polymerase which catalyzes the transcription of viral DNA into RNA using the four ribonucleoside triphosphates as substrates. Responsible for the transcription of early, intermediate and late genes. DNA-dependent RNA polymerase associates with the early transcription factor (ETF), itself composed of D6 and A7, thereby allowing the early genes transcription. Late transcription, and probably also intermediate transcription, require newly synthesized RNA polymerase. This Homo sapiens (Human) protein is DNA-directed RNA polymerase 133 kDa polypeptide (RPO132).